A 645-amino-acid chain; its full sequence is tRNA 5-methylaminomethyl-2-thiouridine biosynthesis bifunctional protein MnmC (645 aa).

The tract at residues 1 to 230 is tRNA (mnm(5)s(2)U34)-methyltransferase; the sequence is MPMSEPIDWL…KRHNLHAVFD (230 aa). Residues 254-645 form an FAD-dependent cmnm(5)s(2)U34 oxidoreductase region; it reads LGAGIAGAAA…LASERLGRRR (392 aa).

The protein in the N-terminal section; belongs to the methyltransferase superfamily. tRNA (mnm(5)s(2)U34)-methyltransferase family. It in the C-terminal section; belongs to the DAO family. FAD is required as a cofactor.

The protein resides in the cytoplasm. It carries out the reaction 5-aminomethyl-2-thiouridine(34) in tRNA + S-adenosyl-L-methionine = 5-methylaminomethyl-2-thiouridine(34) in tRNA + S-adenosyl-L-homocysteine + H(+). Functionally, catalyzes the last two steps in the biosynthesis of 5-methylaminomethyl-2-thiouridine (mnm(5)s(2)U) at the wobble position (U34) in tRNA. Catalyzes the FAD-dependent demodification of cmnm(5)s(2)U34 to nm(5)s(2)U34, followed by the transfer of a methyl group from S-adenosyl-L-methionine to nm(5)s(2)U34, to form mnm(5)s(2)U34. This Delftia acidovorans (strain DSM 14801 / SPH-1) protein is tRNA 5-methylaminomethyl-2-thiouridine biosynthesis bifunctional protein MnmC.